The chain runs to 61 residues: MSFLKKSLFLVLFLGLVSFSICEEEKRETEEEENKDETEEQSEEKKRFEPVPPGFTPFRLT.

The signal sequence occupies residues 1–22; the sequence is MSFLKKSLFLVLFLGLVSFSIC. Residues 23–48 constitute a propeptide that is removed on maturation; sequence EEEKRETEEEENKDETEEQSEEKKRF. The segment at 24 to 61 is disordered; the sequence is EEKRETEEEENKDETEEQSEEKKRFEPVPPGFTPFRLT. The span at 30 to 42 shows a compositional bias: acidic residues; the sequence is EEEENKDETEEQS.

The protein belongs to the frog skin active peptide (FSAP) family. Bradykinin-related peptide subfamily. In terms of tissue distribution, expressed by the skin glands.

It is found in the secreted. May produce in vitro relaxation of rat arterial smooth muscle and constriction of intestinal smooth muscle. May target bradykinin receptors (BDKRB). This chain is Probradykinin-1, found in Pithecopus azureus (Orange-legged monkey tree frog).